The chain runs to 132 residues: Small ribosomal subunit protein uS8 (132 aa).

This sequence belongs to the universal ribosomal protein uS8 family. As to quaternary structure, part of the 30S ribosomal subunit. Contacts proteins S5 and S12.

In terms of biological role, one of the primary rRNA binding proteins, it binds directly to 16S rRNA central domain where it helps coordinate assembly of the platform of the 30S subunit. In Levilactobacillus brevis (strain ATCC 367 / BCRC 12310 / CIP 105137 / JCM 1170 / LMG 11437 / NCIMB 947 / NCTC 947) (Lactobacillus brevis), this protein is Small ribosomal subunit protein uS8.